Reading from the N-terminus, the 495-residue chain is IQ domain-containing protein IQM5 (495 aa).

The disordered stretch occupies residues 89–122; it reads ENRGGEEEDERGSSPKRRNRGNLTALSLPAPTPF. In terms of domain architecture, IQ spans 131-160; sequence LDAAAVTLQKVYKSYRTRRNLADCAVVVEE.

Expressed in roots, rosette and cauline leaves, and at lower levels in stems, flowers and siliques.

Its subcellular location is the cytoplasm. It localises to the nucleus. Its function is as follows. May be involved in biotic and abiotic stress responses. This Arabidopsis thaliana (Mouse-ear cress) protein is IQ domain-containing protein IQM5.